The chain runs to 396 residues: Elongation factor Tu (396 aa).

Positions 10–206 constitute a tr-type G domain; it reads KPHVNIGTIG…AVDESVPDPV (197 aa). Positions 19–26 are G1; sequence GHVDHGKT. Residue 19–26 participates in GTP binding; that stretch reads GHVDHGKT. Thr26 is a binding site for Mg(2+). A G2 region spans residues 62-66; the sequence is GITIN. The G3 stretch occupies residues 83–86; it reads DAPG. Residues 83–87 and 138–141 contribute to the GTP site; these read DAPGH and NKSD. Residues 138–141 are G4; the sequence is NKSD. Residues 176–178 form a G5 region; it reads SGL.

Belongs to the TRAFAC class translation factor GTPase superfamily. Classic translation factor GTPase family. EF-Tu/EF-1A subfamily. As to quaternary structure, monomer.

It is found in the cytoplasm. It carries out the reaction GTP + H2O = GDP + phosphate + H(+). Functionally, GTP hydrolase that promotes the GTP-dependent binding of aminoacyl-tRNA to the A-site of ribosomes during protein biosynthesis. The sequence is that of Elongation factor Tu from Paenarthrobacter aurescens (strain TC1).